A 471-amino-acid polypeptide reads, in one-letter code: MKVKTRFAPSPTGFLHVGGARTALYSWLFAKSQGGEFVLRIEDTDLERSTQEAIDAIIEGMEWLELNWDEGPYYQTKRFDRYNGIIDEMLTDGRAYKCYCSRERLDALREGQMASGEKPRYDGKCRDSAHDHPADAPHVIRFRNPTEGSVVFDDHVRGRIEFANTELDDLIIRRTDGAPTYNFCVVVDDWDMEITHVVRGEDHINNTPRQINIYKALNAPVPEFAHVSMILGDDGAKLSKRHGAVSVMQYRDDGYLPEALLNYLVRLGWSHGDQEIFTLDEMIKLFSLDAISKSASAFNTDKLLWLNNHYMRSLDPAYVAKHLAWHMENQKIDTSKGPSLPEVVTLLAERCNTLVEMAAQSRYLFEDFEAIDEAAAKKHLRGVAAEPLALAKAKLTALDTWTTEALHELIEATAAELGQGMGKVGMPLRVAVTGLGQSPGIDAVMALVGKERVLARIDRALAYIEARMAAE.

The 'HIGH' region motif lies at 9–19; sequence PSPTGFLHVGG. Zn(2+) contacts are provided by C98, C100, C125, and D127. The 'KMSKS' region motif lies at 237 to 241; the sequence is KLSKR. K240 serves as a coordination point for ATP.

Belongs to the class-I aminoacyl-tRNA synthetase family. Glutamate--tRNA ligase type 1 subfamily. In terms of assembly, monomer. It depends on Zn(2+) as a cofactor.

The protein resides in the cytoplasm. The enzyme catalyses tRNA(Glu) + L-glutamate + ATP = L-glutamyl-tRNA(Glu) + AMP + diphosphate. In terms of biological role, catalyzes the attachment of glutamate to tRNA(Glu) in a two-step reaction: glutamate is first activated by ATP to form Glu-AMP and then transferred to the acceptor end of tRNA(Glu). The sequence is that of Glutamate--tRNA ligase from Aeromonas salmonicida (strain A449).